A 205-amino-acid chain; its full sequence is Glycerol-3-phosphate acyltransferase (205 aa).

6 helical membrane-spanning segments follow: residues 8–28 (IALF…GYLA), 57–77 (TPAL…ILIA), 84–104 (ESLQ…PVWL), 118–138 (VFLG…LLIL), 143–163 (IVSL…LINS), and 164–184 (KETF…LVLW).

It belongs to the PlsY family. As to quaternary structure, probably interacts with PlsX.

The protein resides in the cell inner membrane. It catalyses the reaction an acyl phosphate + sn-glycerol 3-phosphate = a 1-acyl-sn-glycero-3-phosphate + phosphate. It functions in the pathway lipid metabolism; phospholipid metabolism. Functionally, catalyzes the transfer of an acyl group from acyl-phosphate (acyl-PO(4)) to glycerol-3-phosphate (G3P) to form lysophosphatidic acid (LPA). This enzyme utilizes acyl-phosphate as fatty acyl donor, but not acyl-CoA or acyl-ACP. This Prochlorococcus marinus (strain SARG / CCMP1375 / SS120) protein is Glycerol-3-phosphate acyltransferase.